The sequence spans 343 residues: Lipase chaperone (343 aa).

The helical transmembrane segment at 7–27 (IYLGIGLVALLMIFIYWLMPK) threads the bilayer.

This sequence belongs to the lipase chaperone family.

Its subcellular location is the cell inner membrane. Its function is as follows. May be involved in the folding of the extracellular lipase during its passage through the periplasm. In Acinetobacter baylyi (strain ATCC 33305 / BD413 / ADP1), this protein is Lipase chaperone (lifO).